The chain runs to 146 residues: MSTTTEILAHHWAFGLFLIIAVGLCVFMLTGGFLLGGRAKGRAKNVPYESGIDSVGSARLRLSAKFYLVAMFFVIFDVEALYLYAWAVSIKESGWIGFIEATIFILVLLAGLIYLVRVGALDWTPVRSKRQVVKSDIINTTNNHPQ.

3 helical membrane-spanning segments follow: residues 14–34, 68–88, and 96–116; these read FGLFLIIAVGLCVFMLTGGFL, LVAMFFVIFDVEALYLYAWAV, and IGFIEATIFILVLLAGLIYLV.

This sequence belongs to the complex I subunit 3 family. NDH-1 is composed of 13 different subunits. Subunits NuoA, H, J, K, L, M, N constitute the membrane sector of the complex.

The protein localises to the cell inner membrane. It catalyses the reaction a quinone + NADH + 5 H(+)(in) = a quinol + NAD(+) + 4 H(+)(out). NDH-1 shuttles electrons from NADH, via FMN and iron-sulfur (Fe-S) centers, to quinones in the respiratory chain. The immediate electron acceptor for the enzyme in this species is believed to be ubiquinone. Couples the redox reaction to proton translocation (for every two electrons transferred, four hydrogen ions are translocated across the cytoplasmic membrane), and thus conserves the redox energy in a proton gradient. The sequence is that of NADH-quinone oxidoreductase subunit A from Pectobacterium carotovorum subsp. carotovorum (Erwinia carotovora subsp. carotovora).